The primary structure comprises 503 residues: Ent-kaurene oxidase-like 5 (503 aa).

Residues 8–28 (GAGGIGVAAAAAVVAATLAVV) traverse the membrane as a helical segment. A heme-binding site is contributed by Cys-448.

Belongs to the cytochrome P450 family. Heme serves as cofactor. Expressed in roots.

The protein resides in the membrane. May hydroxylate diterpenes. This is Ent-kaurene oxidase-like 5 from Oryza sativa subsp. japonica (Rice).